A 697-amino-acid polypeptide reads, in one-letter code: Polyribonucleotide nucleotidyltransferase (697 aa).

Residues aspartate 487 and aspartate 493 each contribute to the Mg(2+) site. Residues 554-613 (PRIETIQIKPSKIAVVIGPGGKQIRAIIEQTGVQIDIDDTGLVNIAAIDLVSIEKAKAII) enclose the KH domain. The 69-residue stretch at 623–691 (GRIYSGKAIS…ERGQIKLSRK (69 aa)) folds into the S1 motif domain.

Belongs to the polyribonucleotide nucleotidyltransferase family. Mg(2+) serves as cofactor.

It is found in the cytoplasm. The enzyme catalyses RNA(n+1) + phosphate = RNA(n) + a ribonucleoside 5'-diphosphate. Functionally, involved in mRNA degradation. Catalyzes the phosphorolysis of single-stranded polyribonucleotides processively in the 3'- to 5'-direction. The chain is Polyribonucleotide nucleotidyltransferase from Protochlamydia amoebophila (strain UWE25).